The primary structure comprises 537 residues: Ataxin-10 homolog (537 aa).

This sequence belongs to the ataxin-10 family.

The protein localises to the cytoplasm. May play a role in the regulation of cytokinesis. The sequence is that of Ataxin-10 homolog (CTR86) from Kluyveromyces lactis (strain ATCC 8585 / CBS 2359 / DSM 70799 / NBRC 1267 / NRRL Y-1140 / WM37) (Yeast).